Reading from the N-terminus, the 327-residue chain is Acetyl-coenzyme A carboxylase carboxyl transferase subunit alpha (327 aa).

The CoA carboxyltransferase C-terminal domain maps to 46-299 (LEARAIQLRR…RQVLLRHLKD (254 aa)).

This sequence belongs to the AccA family. In terms of assembly, acetyl-CoA carboxylase is a heterohexamer composed of biotin carboxyl carrier protein (AccB), biotin carboxylase (AccC) and two subunits each of ACCase subunit alpha (AccA) and ACCase subunit beta (AccD).

The protein resides in the cytoplasm. The catalysed reaction is N(6)-carboxybiotinyl-L-lysyl-[protein] + acetyl-CoA = N(6)-biotinyl-L-lysyl-[protein] + malonyl-CoA. The protein operates within lipid metabolism; malonyl-CoA biosynthesis; malonyl-CoA from acetyl-CoA: step 1/1. Its function is as follows. Component of the acetyl coenzyme A carboxylase (ACC) complex. First, biotin carboxylase catalyzes the carboxylation of biotin on its carrier protein (BCCP) and then the CO(2) group is transferred by the carboxyltransferase to acetyl-CoA to form malonyl-CoA. This is Acetyl-coenzyme A carboxylase carboxyl transferase subunit alpha from Synechococcus elongatus (strain ATCC 33912 / PCC 7942 / FACHB-805) (Anacystis nidulans R2).